We begin with the raw amino-acid sequence, 520 residues long: NADH-quinone oxidoreductase subunit N (520 aa).

The next 14 membrane-spanning stretches (helical) occupy residues 13-33 (ALLPEMLLSGGAMLLLLASVW), 55-75 (FGVILCLVVGLAVVIAWGDGA), 87-107 (GFRWAVDLVILLGTALALMLL), 115-135 (AAFGPEVPSLMLLASTGMMVL), 141-161 (LMFVFLGVELMSLAVYVLAGV), 176-196 (FLLGAISSGFLLYGMALLFGA), 219-239 (FMSGVALLLVGLAFKVAAAPF), 250-270 (APLPVTAFMSATVKTAAFAVF), 285-305 (WHMGLWWLAAVTMVVGNVFAL), 313-333 (MLAYSSIAHAGYLLVSIIVGD), 339-359 (ALIFYVVSYTLATMGAFGVLI), 383-403 (WLAIAMTVFLLAFMGMPVLGG), 425-445 (ILAVVLVIASAVSAAYYLAVV), and 468-488 (SLIATAAVALLVFGLYPTPIM). The span at 494-508 (ATTTTSPTSNPAAPR) shows a compositional bias: low complexity. The segment at 494–520 (ATTTTSPTSNPAAPRGEVRLQTASVPR) is disordered.

It belongs to the complex I subunit 2 family. NDH-1 is composed of 14 different subunits. Subunits NuoA, H, J, K, L, M, N constitute the membrane sector of the complex.

Its subcellular location is the cell inner membrane. It catalyses the reaction a quinone + NADH + 5 H(+)(in) = a quinol + NAD(+) + 4 H(+)(out). NDH-1 shuttles electrons from NADH, via FMN and iron-sulfur (Fe-S) centers, to quinones in the respiratory chain. The immediate electron acceptor for the enzyme in this species is believed to be ubiquinone. Couples the redox reaction to proton translocation (for every two electrons transferred, four hydrogen ions are translocated across the cytoplasmic membrane), and thus conserves the redox energy in a proton gradient. This is NADH-quinone oxidoreductase subunit N from Gemmatimonas aurantiaca (strain DSM 14586 / JCM 11422 / NBRC 100505 / T-27).